The sequence spans 519 residues: MDAVLEPFPADRLFPGSSFLDLGDLNESDFLNNAHFPEHLDHFVENMEDFSNDLFSSFFDDPVLDEKSALLDMELDSPAPGIQAEHSYSLSGDSAPQSPLVPVKMEDTTQDVEHGAWALGNKLCSIMVKQEQSPELPVDPLAASSAMAAAAAMATPPLLGLSPMPRLPIPHQAPGEMTQLPVIKAEPPEMSQFLKVTPEDLVQMPPTPPSSHGSDSDGSQSPRSLPPSSPVRPMARSSTAISTSPLLTAPHKLQGTSGPLLLTEEEKRTLIAEGYPIPTKLPLTKAEEKALKRVRRKIKNKISAQESRRKKKEYVECLEKKVETYTSENNELWKKVETLETANRTLLQQLQKLQTLVTSKISRPYKMAATQTGTCLMVAALCFVLVLGSLVPCLPAFSSGSMTVKEDPIAADSVYAASQMPSRSLLFYDDGAGSWEDGRGALLPVEPPEGWELKPGGPAEQRPQDHLRHDRADSIHETTKYLRETWPEDTDDNGTSPNFSHPEWFHDRDLGPNTTIKLS.

The tract at residues 1-60 is required for transcription activation; sequence MDAVLEPFPADRLFPGSSFLDLGDLNESDFLNNAHFPEHLDHFVENMEDFSNDLFSSFFD. Residues 1 to 376 lie on the Cytoplasmic side of the membrane; sequence MDAVLEPFPA…MAATQTGTCL (376 aa). Lysine 184 is covalently cross-linked (Glycyl lysine isopeptide (Lys-Gly) (interchain with G-Cter in SUMO2)). A disordered region spans residues 200 to 259; it reads DLVQMPPTPPSSHGSDSDGSQSPRSLPPSSPVRPMARSSTAISTSPLLTAPHKLQGTSGP. Residues 210–223 are compositionally biased toward low complexity; it reads SSHGSDSDGSQSPR. Polar residues predominate over residues 236–246; sequence RSSTAISTSPL. A bZIP domain is found at 290-353; sequence ALKRVRRKIK…RTLLQQLQKL (64 aa). The basic motif stretch occupies residues 292–321; the sequence is KRVRRKIKNKISAQESRRKKKEYVECLEKK. The interval 332–353 is leucine-zipper; the sequence is LWKKVETLETANRTLLQQLQKL. Residues 377–397 traverse the membrane as a helical; Signal-anchor for type II membrane protein segment; that stretch reads MVAALCFVLVLGSLVPCLPAF. The short motif at 392–395 is the S2P recognition element; it reads PCLP. The Lumenal portion of the chain corresponds to 398–519; it reads SSGSMTVKED…LGPNTTIKLS (122 aa). The S1P recognition motif lies at 423 to 426; sequence RSLL. The interval 449–519 is disordered; that stretch reads EGWELKPGGP…LGPNTTIKLS (71 aa). Basic and acidic residues predominate over residues 462 to 486; the sequence is RPQDHLRHDRADSIHETTKYLRETW. Residues asparagine 493, asparagine 498, and asparagine 513 are each glycosylated (N-linked (GlcNAc...) asparagine).

This sequence belongs to the bZIP family. ATF subfamily. Interacts with SMAD4, the interaction takes place upon TGFB1 induction and SMAD4 acts as a CREB3L1 coactivator to induce the expression of genes involved in assembly of collagen extracellular matrix. N-glycosylated. Post-translationally, ubiquitinated by HRD1/SYVN1; undergoes 'Lys-48'-linked ubiquitination, followed by rapid proteasomal degradation under normal conditions. Upon ER stress, SYVN1 E3 ubiquitin-protein ligase dissociates from its substrate, ubiquitination does not occur and CREB3L1 is stabilized. In terms of processing, upon ER stress or DNA damage, translocated to the Golgi apparatus, where it is processed by regulated intramembrane proteolysis (RIP) to release the cytosol-facing N-terminal transcription factor domain. The cleavage is performed sequentially by site-1 and site-2 proteases (S1P/MBTPS1 and S2P/MBTPS2). RIP is induced by TGFB1 and ceramide. In terms of tissue distribution, expressed in cortical and trabecular bones. Highly expressed in osteoblasts, but not detected in osteoclasts, nor in macrophages. Expressed at relatively low levels in lung and kidney. Weakly expressed in brain and spleen. Expressed in astrocytes.

The protein localises to the endoplasmic reticulum membrane. It localises to the nucleus. Precursor of the transcription factor form (Processed cyclic AMP-responsive element-binding protein 3-like protein 1), which is embedded in the endoplasmic reticulum membrane with N-terminal DNA-binding and transcription activation domains oriented toward the cytosolic face of the membrane. In response to ER stress or DNA damage, transported to the Golgi, where it is cleaved in a site-specific manner by resident proteases S1P/MBTPS1 and S2P/MBTPS2. The released N-terminal cytosolic domain is translocated to the nucleus where it activates transcription of specific target genes involved in the cell-cycle progression inhibition. Its function is as follows. Transcription factor involved in cell type specific DNA damage and unfolded protein response (UPR). Binds the DNA consensus sequence 5'-GTGXGCXGC-3'. Plays a critical role in bone formation through the transcription of COL1A1, and possibly COL1A2, and the secretion of bone matrix proteins. Directly binds to the UPR element (UPRE)-like sequence in an osteoblast-specific COL1A1 promoter region and induces its transcription. Does not regulate COL1A1 in other tissues, such as skin. Required to protect astrocytes from ER stress-induced cell death. In astrocytes, binds to the cAMP response element (CRE) of the BiP/HSPA5 promoter and participate in its transcriptional activation. In astrocytes and osteoblasts, upon DNA damage, inhibits cell-cycle progression after G2/M phase by binding to promoters and activating transcription of genes encoding cell-cycle inhibitors, such as p21/CDKN1A. Required for TGFB1 to activate genes involved in the assembly of collagen extracellular matrix. The polypeptide is Cyclic AMP-responsive element-binding protein 3-like protein 1 (Creb3l1) (Mus musculus (Mouse)).